Here is a 772-residue protein sequence, read N- to C-terminus: Probable beta-glucosidase M (772 aa).

An N-terminal signal peptide occupies residues 1–20 (MLTSWGKTGFVLALALGGRA). An N-linked (GlcNAc...) asparagine glycan is attached at Asn259. Asp287 is an active-site residue. N-linked (GlcNAc...) asparagine glycans are attached at residues Asn315, Asn322, Asn438, Asn523, Asn547, Asn574, and Asn586.

Belongs to the glycosyl hydrolase 3 family.

It is found in the secreted. The enzyme catalyses Hydrolysis of terminal, non-reducing beta-D-glucosyl residues with release of beta-D-glucose.. It functions in the pathway glycan metabolism; cellulose degradation. In terms of biological role, beta-glucosidases are one of a number of cellulolytic enzymes involved in the degradation of cellulosic biomass. Catalyzes the last step releasing glucose from the inhibitory cellobiose. This is Probable beta-glucosidase M (bglM) from Emericella nidulans (strain FGSC A4 / ATCC 38163 / CBS 112.46 / NRRL 194 / M139) (Aspergillus nidulans).